The sequence spans 449 residues: Glucose-6-phosphate isomerase (449 aa).

The Proton donor role is filled by glutamate 291. Active-site residues include histidine 312 and lysine 426.

This sequence belongs to the GPI family.

The protein resides in the cytoplasm. It catalyses the reaction alpha-D-glucose 6-phosphate = beta-D-fructose 6-phosphate. Its pathway is carbohydrate biosynthesis; gluconeogenesis. It functions in the pathway carbohydrate degradation; glycolysis; D-glyceraldehyde 3-phosphate and glycerone phosphate from D-glucose: step 2/4. Its function is as follows. Catalyzes the reversible isomerization of glucose-6-phosphate to fructose-6-phosphate. The polypeptide is Glucose-6-phosphate isomerase (Streptococcus pyogenes serotype M3 (strain ATCC BAA-595 / MGAS315)).